A 167-amino-acid polypeptide reads, in one-letter code: Large ribosomal subunit protein bL9 (167 aa).

It belongs to the bacterial ribosomal protein bL9 family.

In terms of biological role, binds to the 23S rRNA. The polypeptide is Large ribosomal subunit protein bL9 (Nitratidesulfovibrio vulgaris (strain ATCC 29579 / DSM 644 / CCUG 34227 / NCIMB 8303 / VKM B-1760 / Hildenborough) (Desulfovibrio vulgaris)).